We begin with the raw amino-acid sequence, 511 residues long: Small ribosomal subunit protein uS4m (511 aa).

Residues 202–272 form the S4 RNA-binding domain; it reads KRLDVVLYRS…IKNNLFSNIN (71 aa).

This sequence belongs to the universal ribosomal protein uS4 family.

Its subcellular location is the mitochondrion. The polypeptide is Small ribosomal subunit protein uS4m (RPS4) (Prototheca wickerhamii).